Here is a 263-residue protein sequence, read N- to C-terminus: Aminoglycoside 3'-phosphotransferase (263 aa).

The Proton acceptor role is filled by Asp-189.

Belongs to the aminoglycoside phosphotransferase family.

The enzyme catalyses kanamycin A + ATP = kanamycin 3'-phosphate + ADP + H(+). Its function is as follows. Resistance to kanamycin and structurally-related aminoglycosides, including amikacin. The chain is Aminoglycoside 3'-phosphotransferase (aphA) from Staphylococcus aureus.